Reading from the N-terminus, the 203-residue chain is Phosphatidylglycerophosphatase B (203 aa).

Residue Met1 is a topological domain, cytoplasmic. Residues 2–17 (YKPVSLFLFFLILAAA) traverse the membrane as a helical segment. The Extracellular segment spans residues 18–55 (IHTNAVQSADEAISKAAVLIRQPWLNEVMTGITHLGAS). A helical membrane pass occupies residues 56–74 (SFLLPLIVIIGAGMFFYRK). The Cytoplasmic portion of the chain corresponds to 75-78 (TWDG). A helical membrane pass occupies residues 79–99 (LLMLLVFGTDRLLNKVLKEWI). The tract at residues 96–104 (KEWIERVRP) is phosphatase sequence motif I. Residues 100 to 119 (ERVRPDFAPLVHESSFSFPS) are Extracellular-facing. Residues 118–121 (PSGH) are phosphatase sequence motif II. The chain crosses the membrane as a helical span at residues 120-139 (GHSMNAACVYPVIAYFLVKH). His121 acts as the Proton donors in catalysis. Topologically, residues 140–146 (LPFLSKH) are cytoplasmic. The helical transmembrane segment at 147–167 (KKMVYIIAGVIAVLVGISRVY) threads the bilayer. The interval 164 to 175 (SRVYLGVHFVTD) is phosphatase sequence motif III. Residues 168-172 (LGVHF) are Extracellular-facing. Residue His171 is the Nucleophile of the active site. The chain crosses the membrane as a helical span at residues 173–196 (VTDVLGGFSLGLLLFFLVKGFDEK). Residues 197–203 (IKRFRQK) are Cytoplasmic-facing.

Belongs to the PA-phosphatase related phosphoesterase family.

Its subcellular location is the cell membrane. It catalyses the reaction a 1,2-diacyl-sn-glycero-3-phospho-(1'-sn-glycero-3'-phosphate) + H2O = a 1,2-diacyl-sn-glycero-3-phospho-(1'-sn-glycerol) + phosphate. Functionally, catalyzes the dephosphorylation of phosphatidylglycerophosphate (PGP) to phosphatidylglycerol. Also has undecaprenyl pyrophosphate phosphatase activity, required for the biosynthesis of the lipid carrier undecaprenyl phosphate. The sequence is that of Phosphatidylglycerophosphatase B from Bacillus subtilis (strain 168).